Reading from the N-terminus, the 357-residue chain is Cobalt-precorrin-5B C(1)-methyltransferase (357 aa).

This sequence belongs to the CbiD family.

The enzyme catalyses Co-precorrin-5B + S-adenosyl-L-methionine = Co-precorrin-6A + S-adenosyl-L-homocysteine. The protein operates within cofactor biosynthesis; adenosylcobalamin biosynthesis; cob(II)yrinate a,c-diamide from sirohydrochlorin (anaerobic route): step 6/10. Its function is as follows. Catalyzes the methylation of C-1 in cobalt-precorrin-5B to form cobalt-precorrin-6A. The protein is Cobalt-precorrin-5B C(1)-methyltransferase of Alkaliphilus oremlandii (strain OhILAs) (Clostridium oremlandii (strain OhILAs)).